The chain runs to 276 residues: Elongation factor Ts (276 aa).

The interval 81 to 84 (TDFV) is involved in Mg(2+) ion dislocation from EF-Tu.

Belongs to the EF-Ts family.

It is found in the cytoplasm. Its function is as follows. Associates with the EF-Tu.GDP complex and induces the exchange of GDP to GTP. It remains bound to the aminoacyl-tRNA.EF-Tu.GTP complex up to the GTP hydrolysis stage on the ribosome. The protein is Elongation factor Ts of Leifsonia xyli subsp. xyli (strain CTCB07).